A 205-amino-acid chain; its full sequence is Large ribosomal subunit protein uL4 (205 aa).

The interval Lys44–Ser77 is disordered. Basic residues predominate over residues Val51 to Gly71.

This sequence belongs to the universal ribosomal protein uL4 family. As to quaternary structure, part of the 50S ribosomal subunit.

Its function is as follows. One of the primary rRNA binding proteins, this protein initially binds near the 5'-end of the 23S rRNA. It is important during the early stages of 50S assembly. It makes multiple contacts with different domains of the 23S rRNA in the assembled 50S subunit and ribosome. Functionally, forms part of the polypeptide exit tunnel. The sequence is that of Large ribosomal subunit protein uL4 from Lactobacillus delbrueckii subsp. bulgaricus (strain ATCC 11842 / DSM 20081 / BCRC 10696 / JCM 1002 / NBRC 13953 / NCIMB 11778 / NCTC 12712 / WDCM 00102 / Lb 14).